An 849-amino-acid polypeptide reads, in one-letter code: G-type lectin S-receptor-like serine/threonine-protein kinase At4g11900 (849 aa).

Positions 1 to 26 (MQICKKNVFLLYYGVLVFLSFQVSSS) are cleaved as a signal peptide. The 154-residue stretch at 27 to 180 (TDTISTNQPL…PNSSAAVLWQ (154 aa)) folds into the Bulb-type lectin domain. Residues 27 to 466 (TDTISTNQPL…RKTEHSKGKS (440 aa)) are Extracellular-facing. Residues Asn-111, Asn-148, Asn-172, and Asn-232 are each glycosylated (N-linked (GlcNAc...) asparagine). One can recognise an EGF-like domain in the interval 311-348 (PDNRCDVYNSCGSFGICNENREPPPCRCVPGFKREFSQ). 4 cysteine pairs are disulfide-bonded: Cys-315/Cys-327, Cys-321/Cys-336, Cys-401/Cys-421, and Cys-405/Cys-411. One can recognise a PAN domain in the interval 368 to 447 (CYKRNDEFLP…KGHTFFLRLA (80 aa)). Residue Asn-450 is glycosylated (N-linked (GlcNAc...) asparagine). A helical transmembrane segment spans residues 467–487 (IVLPLVLASLVATAACFVGLY). At 488-849 (CCISSRIRRK…EATQTELEAR (362 aa)) the chain is on the cytoplasmic side. Residues 537-822 (FSRKKKLGEG…TLPIPKQPTF (286 aa)) form the Protein kinase domain. Residues 543–551 (LGEGGFGPV) and Lys-565 contribute to the ATP site. At Ser-571 the chain carries Phosphoserine. Residues 626–643 (LKSRELDWETRMKIVNGT) are caM-binding. The Proton acceptor role is filled by Asp-662. A phosphoserine mark is found at Ser-666 and Ser-679. Position 696 is a phosphothreonine (Thr-696). The residue at position 837 (Ser-837) is a Phosphoserine. At Thr-844 the chain carries Phosphothreonine.

It belongs to the protein kinase superfamily. Ser/Thr protein kinase family.

It is found in the cell membrane. The enzyme catalyses L-seryl-[protein] + ATP = O-phospho-L-seryl-[protein] + ADP + H(+). It catalyses the reaction L-threonyl-[protein] + ATP = O-phospho-L-threonyl-[protein] + ADP + H(+). The polypeptide is G-type lectin S-receptor-like serine/threonine-protein kinase At4g11900 (Arabidopsis thaliana (Mouse-ear cress)).